A 193-amino-acid chain; its full sequence is Fe/S biogenesis protein NfuA (193 aa).

Residues C150 and C153 each coordinate [4Fe-4S] cluster.

The protein belongs to the NfuA family. As to quaternary structure, homodimer. It depends on [4Fe-4S] cluster as a cofactor.

Involved in iron-sulfur cluster biogenesis. Binds a 4Fe-4S cluster, can transfer this cluster to apoproteins, and thereby intervenes in the maturation of Fe/S proteins. Could also act as a scaffold/chaperone for damaged Fe/S proteins. In Histophilus somni (strain 129Pt) (Haemophilus somnus), this protein is Fe/S biogenesis protein NfuA.